The following is a 151-amino-acid chain: Ribonuclease H (151 aa).

One can recognise an RNase H type-1 domain in the interval 1 to 141 (MQEVTVYSDG…ADALANKGVE (141 aa)). Mg(2+)-binding residues include aspartate 9, glutamate 47, aspartate 69, and aspartate 133.

It belongs to the RNase H family. In terms of assembly, monomer. The cofactor is Mg(2+).

Its subcellular location is the cytoplasm. It catalyses the reaction Endonucleolytic cleavage to 5'-phosphomonoester.. Functionally, endonuclease that specifically degrades the RNA of RNA-DNA hybrids. The protein is Ribonuclease H of Ralstonia nicotianae (strain ATCC BAA-1114 / GMI1000) (Ralstonia solanacearum).